Here is a 476-residue protein sequence, read N- to C-terminus: Ribulose bisphosphate carboxylase large chain (476 aa).

Substrate-binding residues include Asn-124 and Thr-174. The Proton acceptor role is filled by Lys-176. Lys-178 lines the substrate pocket. The Mg(2+) site is built by Lys-202, Asp-204, and Glu-205. The residue at position 202 (Lys-202) is an N6-carboxylysine. His-295 functions as the Proton acceptor in the catalytic mechanism. 3 residues coordinate substrate: Arg-296, His-328, and Ser-380.

It belongs to the RuBisCO large chain family. Type I subfamily. In terms of assembly, heterohexadecamer of 8 large chains and 8 small chains; disulfide-linked. The disulfide link is formed within the large subunit homodimers. Mg(2+) is required as a cofactor. In terms of processing, the disulfide bond which can form in the large chain dimeric partners within the hexadecamer appears to be associated with oxidative stress and protein turnover.

The protein resides in the carboxysome. It catalyses the reaction 2 (2R)-3-phosphoglycerate + 2 H(+) = D-ribulose 1,5-bisphosphate + CO2 + H2O. The catalysed reaction is D-ribulose 1,5-bisphosphate + O2 = 2-phosphoglycolate + (2R)-3-phosphoglycerate + 2 H(+). In terms of biological role, ruBisCO catalyzes two reactions: the carboxylation of D-ribulose 1,5-bisphosphate, the primary event in carbon dioxide fixation, as well as the oxidative fragmentation of the pentose substrate in the photorespiration process. Both reactions occur simultaneously and in competition at the same active site. The sequence is that of Ribulose bisphosphate carboxylase large chain from Trichodesmium erythraeum (strain IMS101).